The primary structure comprises 412 residues: Double C2-like domain-containing protein beta (412 aa).

A negatively regulates targeting to plasma membrane region spans residues 1-36 (MTLRRRGEKATISIQEHMAIDVCPGPIRPIKQISDY). Positions 1 to 90 (MTLRRRGEKA…EDVDQLFGAY (90 aa)) are mediates interaction with DYNLT1. Residues 38–123 (PRFPRGLPPD…PDADGYESDD (86 aa)) are disordered. A compositionally biased stretch (low complexity) spans 49-70 (GPRAAAPPDAPARPAVAGAGRR). Pro residues predominate over residues 95-108 (GPSPGPSPARPPAK). A compositionally biased stretch (acidic residues) spans 112–123 (DEPDADGYESDD). C2 domains lie at 126–250 (ALGT…SICL) and 266–399 (ERGR…ERWH). Positions 157, 163, 218, 220, 297, 303, 357, 359, and 365 each coordinate Ca(2+). The segment at 257–375 (DKTEDKSLEE…FIGGVVLGIH (119 aa)) is mediates interaction with STXBP3. Residue Ser411 is modified to Phosphoserine.

In terms of assembly, interacts with the SNARE (soluble N-ethylmaleimide-sensitive factor attached protein receptor) complex composed of SNAP25, STX1A and VAMP2; the interaction is calcium-dependent and competitive with SYT1. Interacts with STX4; the interaction is calcium-dependent, increased by insulin and glucose, and mediates vesicle fusion with plasma membrane in pancreatic cells and adipocytes. Interacts with STXBP3; the interaction is direct, occurs at the cell membrane and regulates glucose-stimulated insulin secretion. May interact with UNC13A; the interaction mediates targeting to the plasma membrane. Interacts with cytoplasmic dynein light chain DYNLT1. Ca(2+) serves as cofactor. In terms of tissue distribution, widely expressed with highest levels in brain and kidney. Expressed in pancreatic islet cells (at protein level).

Its subcellular location is the cytoplasm. The protein resides in the cytoplasmic granule. It is found in the cell membrane. Calcium sensor which positively regulates SNARE-dependent fusion of vesicles with membranes. Binds phospholipids in a calcium-dependent manner and may act at the priming stage of fusion by modifying membrane curvature to stimulate fusion. Involved in calcium-triggered exocytosis in chromaffin cells and calcium-dependent spontaneous release of neurotransmitter in absence of action potentials in neuronal cells. Involved both in glucose-stimulated insulin secretion in pancreatic cells and insulin-dependent GLUT4 transport to the plasma membrane in adipocytes. The chain is Double C2-like domain-containing protein beta from Homo sapiens (Human).